The primary structure comprises 450 residues: Phosphoglucosamine mutase (450 aa).

The active-site Phosphoserine intermediate is Ser102. Mg(2+) contacts are provided by Ser102, Asp243, Asp245, and Asp247. Residue Ser102 is modified to Phosphoserine.

This sequence belongs to the phosphohexose mutase family. Mg(2+) is required as a cofactor. Activated by phosphorylation.

The enzyme catalyses alpha-D-glucosamine 1-phosphate = D-glucosamine 6-phosphate. In terms of biological role, catalyzes the conversion of glucosamine-6-phosphate to glucosamine-1-phosphate. The polypeptide is Phosphoglucosamine mutase (Allorhizobium ampelinum (strain ATCC BAA-846 / DSM 112012 / S4) (Agrobacterium vitis (strain S4))).